We begin with the raw amino-acid sequence, 395 residues long: Digeranylgeranylglycerophospholipid reductase (395 aa).

9 residues coordinate FAD: Ala15, Asp34, Cys45, Ala46, Ala48, Arg97, Ala121, Asp276, and Gly288. Arg329 contacts a 2,3-bis-O-(geranylgeranyl)-sn-glycerol 1-phospholipid.

Belongs to the geranylgeranyl reductase family. DGGGPL reductase subfamily. FAD is required as a cofactor.

It catalyses the reaction a 2,3-bis-O-phytanyl-sn-glycerol 1-phospholipid + 8 A = a 2,3-bis-O-(geranylgeranyl)-sn-glycerol 1-phospholipid + 8 AH2. It carries out the reaction 2,3-bis-O-(phytanyl)-sn-glycerol 1-phosphate + 8 A = 2,3-bis-O-(geranylgeranyl)-sn-glycerol 1-phosphate + 8 AH2. The enzyme catalyses CDP-2,3-bis-O-(geranylgeranyl)-sn-glycerol + 8 AH2 = CDP-2,3-bis-O-(phytanyl)-sn-glycerol + 8 A. The catalysed reaction is archaetidylserine + 8 AH2 = 2,3-bis-O-phytanyl-sn-glycero-3-phospho-L-serine + 8 A. The protein operates within membrane lipid metabolism; glycerophospholipid metabolism. In terms of biological role, is involved in the reduction of 2,3-digeranylgeranylglycerophospholipids (unsaturated archaeols) into 2,3-diphytanylglycerophospholipids (saturated archaeols) in the biosynthesis of archaeal membrane lipids. Catalyzes the formation of archaetidic acid (2,3-di-O-phytanyl-sn-glyceryl phosphate) from 2,3-di-O-geranylgeranylglyceryl phosphate (DGGGP) via the hydrogenation of each double bond of the isoprenoid chains. Is also probably able to reduce double bonds of geranyl groups in CDP-2,3-bis-O-(geranylgeranyl)-sn-glycerol and archaetidylserine, thus acting at various stages in the biosynthesis of archaeal membrane lipids. This Thermococcus kodakarensis (strain ATCC BAA-918 / JCM 12380 / KOD1) (Pyrococcus kodakaraensis (strain KOD1)) protein is Digeranylgeranylglycerophospholipid reductase.